The chain runs to 222 residues: 6,7-dimethyl-8-ribityllumazine synthase, chloroplastic (222 aa).

The transit peptide at 1–66 (MASFAASQTC…NRASFVVTNA (66 aa)) directs the protein to the chloroplast. 5-amino-6-(D-ribitylamino)uracil-binding positions include phenylalanine 89, 122-124 (AYE), and 146-148 (AVV). Residue 151 to 152 (DT) participates in (2S)-2-hydroxy-3-oxobutyl phosphate binding. Residue histidine 154 is the Proton donor of the active site. A 5-amino-6-(D-ribitylamino)uracil-binding site is contributed by phenylalanine 179. (2S)-2-hydroxy-3-oxobutyl phosphate is bound at residue arginine 193.

Belongs to the DMRL synthase family. Oligomer forming an icosahedral capsid.

The protein resides in the plastid. It is found in the chloroplast. The catalysed reaction is (2S)-2-hydroxy-3-oxobutyl phosphate + 5-amino-6-(D-ribitylamino)uracil = 6,7-dimethyl-8-(1-D-ribityl)lumazine + phosphate + 2 H2O + H(+). It participates in cofactor biosynthesis; riboflavin biosynthesis; riboflavin from 2-hydroxy-3-oxobutyl phosphate and 5-amino-6-(D-ribitylamino)uracil: step 1/2. Functionally, catalyzes the formation of 6,7-dimethyl-8-ribityllumazine by condensation of 5-amino-6-(D-ribitylamino)uracil with 3,4-dihydroxy-2-butanone 4-phosphate. This is the penultimate step in the biosynthesis of riboflavin. The chain is 6,7-dimethyl-8-ribityllumazine synthase, chloroplastic from Spinacia oleracea (Spinach).